The sequence spans 367 residues: UDP-N-acetylglucosamine--N-acetylmuramyl-(pentapeptide) pyrophosphoryl-undecaprenol N-acetylglucosamine transferase (367 aa).

UDP-N-acetyl-alpha-D-glucosamine is bound by residues 15–17 (TGG), Asn126, Arg169, Ser197, and Gln298.

The protein belongs to the glycosyltransferase 28 family. MurG subfamily.

The protein resides in the cell inner membrane. The catalysed reaction is di-trans,octa-cis-undecaprenyl diphospho-N-acetyl-alpha-D-muramoyl-L-alanyl-D-glutamyl-meso-2,6-diaminopimeloyl-D-alanyl-D-alanine + UDP-N-acetyl-alpha-D-glucosamine = di-trans,octa-cis-undecaprenyl diphospho-[N-acetyl-alpha-D-glucosaminyl-(1-&gt;4)]-N-acetyl-alpha-D-muramoyl-L-alanyl-D-glutamyl-meso-2,6-diaminopimeloyl-D-alanyl-D-alanine + UDP + H(+). It participates in cell wall biogenesis; peptidoglycan biosynthesis. In terms of biological role, cell wall formation. Catalyzes the transfer of a GlcNAc subunit on undecaprenyl-pyrophosphoryl-MurNAc-pentapeptide (lipid intermediate I) to form undecaprenyl-pyrophosphoryl-MurNAc-(pentapeptide)GlcNAc (lipid intermediate II). This chain is UDP-N-acetylglucosamine--N-acetylmuramyl-(pentapeptide) pyrophosphoryl-undecaprenol N-acetylglucosamine transferase, found in Bradyrhizobium sp. (strain ORS 278).